We begin with the raw amino-acid sequence, 864 residues long: Alanine--tRNA ligase (864 aa).

The Zn(2+) site is built by histidine 534, histidine 538, cysteine 639, and histidine 643.

This sequence belongs to the class-II aminoacyl-tRNA synthetase family. The cofactor is Zn(2+).

The protein localises to the cytoplasm. The enzyme catalyses tRNA(Ala) + L-alanine + ATP = L-alanyl-tRNA(Ala) + AMP + diphosphate. Its function is as follows. Catalyzes the attachment of alanine to tRNA(Ala) in a two-step reaction: alanine is first activated by ATP to form Ala-AMP and then transferred to the acceptor end of tRNA(Ala). Also edits incorrectly charged Ser-tRNA(Ala) and Gly-tRNA(Ala) via its editing domain. This is Alanine--tRNA ligase from Onion yellows phytoplasma (strain OY-M).